Consider the following 307-residue polypeptide: Cytochrome f (307 aa).

The N-terminal stretch at 1 to 24 (MKKNLFLVSVFASLFVGTANNALA) is a signal peptide. 4 residues coordinate heme: Y25, C45, C48, and H49. Residues 273 to 293 (LQGLVIFLGFVLIAQVFLVLK) form a helical membrane-spanning segment.

Belongs to the cytochrome f family. In terms of assembly, the 4 large subunits of the cytochrome b6-f complex are cytochrome b6, subunit IV (17 kDa polypeptide, petD), cytochrome f and the Rieske protein, while the 4 small subunits are PetG, PetL, PetM and PetN. The complex functions as a dimer. It depends on heme as a cofactor.

It is found in the plastid. The protein localises to the chloroplast thylakoid membrane. In terms of biological role, component of the cytochrome b6-f complex, which mediates electron transfer between photosystem II (PSII) and photosystem I (PSI), cyclic electron flow around PSI, and state transitions. The polypeptide is Cytochrome f (Ostreococcus tauri).